The chain runs to 929 residues: Bifunctional glutamine synthetase adenylyltransferase/adenylyl-removing enzyme (929 aa).

The tract at residues 1–422 (MTTPISTSRA…TRHFEQIFAV (422 aa)) is adenylyl removase. Positions 429-929 (LGTFARIRPE…FQLWEDVFGT (501 aa)) are adenylyl transferase.

The protein belongs to the GlnE family. Requires Mg(2+) as cofactor.

The enzyme catalyses [glutamine synthetase]-O(4)-(5'-adenylyl)-L-tyrosine + phosphate = [glutamine synthetase]-L-tyrosine + ADP. It catalyses the reaction [glutamine synthetase]-L-tyrosine + ATP = [glutamine synthetase]-O(4)-(5'-adenylyl)-L-tyrosine + diphosphate. Involved in the regulation of glutamine synthetase GlnA, a key enzyme in the process to assimilate ammonia. When cellular nitrogen levels are high, the C-terminal adenylyl transferase (AT) inactivates GlnA by covalent transfer of an adenylyl group from ATP to specific tyrosine residue of GlnA, thus reducing its activity. Conversely, when nitrogen levels are low, the N-terminal adenylyl removase (AR) activates GlnA by removing the adenylyl group by phosphorolysis, increasing its activity. The regulatory region of GlnE binds the signal transduction protein PII (GlnB) which indicates the nitrogen status of the cell. The polypeptide is Bifunctional glutamine synthetase adenylyltransferase/adenylyl-removing enzyme (Nitrosomonas eutropha (strain DSM 101675 / C91 / Nm57)).